Consider the following 445-residue polypeptide: Putative transcription factor bHLH056 (445 aa).

3 disordered regions span residues 36–70 (NQTH…PPHL), 224–260 (QIQP…AEMH), and 365–445 (PFPN…QPTA). The span at 231–246 (SKLKAREETHGTEEAR) shows a compositional bias: basic and acidic residues. The bHLH domain maps to 255 to 304 (RTAEMHNLAERRRREKINEKMKTLQQLIPRCNKSTKVSTLDDAIEYVKSL). Residues 418-433 (QGQTTSQLSSGQASSS) show a composition bias toward low complexity.

Homodimer.

The protein resides in the nucleus. This chain is Putative transcription factor bHLH056 (BHLH56), found in Arabidopsis thaliana (Mouse-ear cress).